The chain runs to 291 residues: B3 domain-containing protein At2g16210 (291 aa).

The segment at residues 19–114 (FFKVVQSINV…HFTVNIFKLD (96 aa)) is a DNA-binding region (TF-B3 1). The segment covering 149 to 159 (VSSNRGQTTAA) has biased composition (polar residues). The segment at 149–182 (VSSNRGQTTAAESKGRKLNLGKRAAKESQSSKRT) is disordered. The segment covering 172 to 182 (AAKESQSSKRT) has biased composition (basic and acidic residues). The TF-B3 2 DNA-binding region spans 200 to 291 (AAAFTILFKQ…KELLLVVSKP (92 aa)).

The protein localises to the nucleus. This chain is B3 domain-containing protein At2g16210, found in Arabidopsis thaliana (Mouse-ear cress).